The following is a 448-amino-acid chain: MSSSLRFTVSPSLLGPHPHELTYQAEAIRIAHRMLHERTGPGAGFTGWLDLPERYDREEFRRIQEAAARIRGDSDVLVVIGIGGSYLGARATVEALGHAFHNLLPPERRGAPQIFFAGTDLSPRYLTELLDVLEDREVSLNVVSKSGTTTEPAIAFRLLRNWMERRYGKEGARRRIYATTDAARGALKQLADAEGYTRFVIPDDVGGRYSVLTAVGLLPIAAAGIDIDALMAGAAAAAAAYSDPDLERNPCYQYAAARNALYRKGMTTEVLVTYEPALKATAEWWKQLFGESEGKDGKGIFPAAAAFTTDLHSLGQYIQEGMRNLFETVVHVERPSVDIPLPPGDEGDGLGFLGGQTLHHVNHTAFLATRLAHTEGGVPNLTLTLPELTPYHYGYMLYFFMKACAISGYLLGVNPFDQPGVEAYKQNMYALLGKPGFEARRAEIEERL.

Residue Glu-291 is the Proton donor of the active site. Catalysis depends on residues His-312 and Lys-425.

Belongs to the GPI family.

It is found in the cytoplasm. It carries out the reaction alpha-D-glucose 6-phosphate = beta-D-fructose 6-phosphate. It participates in carbohydrate biosynthesis; gluconeogenesis. Its pathway is carbohydrate degradation; glycolysis; D-glyceraldehyde 3-phosphate and glycerone phosphate from D-glucose: step 2/4. In terms of biological role, catalyzes the reversible isomerization of glucose-6-phosphate to fructose-6-phosphate. This Symbiobacterium thermophilum (strain DSM 24528 / JCM 14929 / IAM 14863 / T) protein is Glucose-6-phosphate isomerase.